Consider the following 117-residue polypeptide: Large ribosomal subunit protein bL20 (117 aa).

Belongs to the bacterial ribosomal protein bL20 family.

Binds directly to 23S ribosomal RNA and is necessary for the in vitro assembly process of the 50S ribosomal subunit. It is not involved in the protein synthesizing functions of that subunit. This is Large ribosomal subunit protein bL20 (rplT) from Rickettsia prowazekii (strain Madrid E).